A 504-amino-acid chain; its full sequence is Aromatic and large neutral amino acid transporter 5-3 (504 aa).

Residues 1–24 (MESTEATMVERKAESPSSGDRARS) are disordered. Basic and acidic residues predominate over residues 8–24 (MVERKAESPSSGDRARS). 6 consecutive transmembrane segments (helical) span residues 76–96 (YVVL…FMNW), 138–158 (HLFT…GIML), 165–185 (FGAL…GFSS), 206–226 (FFPC…IIAV), 233–253 (ISFI…GATF), and 256–276 (VMLG…LFII). Asparagine 310 carries an N-linked (GlcNAc...) asparagine glycan. Transmembrane regions (helical) follow at residues 324–344 (LSFL…LFFA), 356–376 (EANQ…GGIA), 381–401 (IVPV…LMLI), 406–426 (CFAA…SFLV), 436–456 (IFYP…GGII), and 475–495 (MTVL…FMYV).

It belongs to the SLC43A transporter (TC 2.A.1.44) family.

The protein localises to the cell membrane. The catalysed reaction is L-tyrosine(in) = L-tyrosine(out). L-tyrosine uptake is stimulated in trans by aromatic and large neutral amino acids, but not smaller or charged amino acids. Functionally, L-tyrosine transporter that is essential for parasite survival and virulence. May also act as an aromatic and large neutral amino acid transporter. Does not cotransport other charged ions. Involved in amino acid homeostasis by facilitating the net uptake of L-tyrosine and maintaining intracellular pools of aromatic and large neutral amino acids through exchange. This is Aromatic and large neutral amino acid transporter 5-3 from Toxoplasma gondii.